We begin with the raw amino-acid sequence, 768 residues long: Dual specificity calcium/calmodulin-dependent 3',5'-cyclic nucleotide phosphodiesterase 1C (768 aa).

The residue at position 1 (Met-1) is an N-acetylmethionine. The interval 183–206 (EKPRFKSIVHAVQAGIFVERMYRR) is calmodulin-binding. Residues 211-588 (VGLSYPPAVI…ERWRAKVPKE (378 aa)) enclose the PDEase domain. The active-site Proton donor is His-288. Residues His-292, His-328, Asp-329, and Asp-436 each coordinate Zn(2+). Asp-329 is a Mg(2+) binding site. 2 disordered regions span residues 513–557 (LIDE…INNS) and 584–719 (KVPK…PPLR). Composition is skewed to polar residues over residues 516 to 536 (ETSQ…INSS) and 543 to 557 (VKSS…INNS). The span at 584–614 (KVPKEEKAKKEAEEKARLAAEEKQKEMEAKS) shows a compositional bias: basic and acidic residues. The span at 631–641 (ETKGQVNGTRT) shows a compositional bias: polar residues. Composition is skewed to basic and acidic residues over residues 642–659 (SKGD…KAGE) and 665–692 (DLKD…DGTK). Positions 698–712 (SPAPSTSSTSRLTLP) are enriched in low complexity.

It belongs to the cyclic nucleotide phosphodiesterase family. PDE1 subfamily. Homodimer. Zn(2+) serves as cofactor. Requires Mg(2+) as cofactor. Highly expressed in olfactory epithelium and at moderate levels, in cerebellum, as well as weakly in forebrain, testis, heart and lung. In the olfactory epithelium, expressed by sensory neurons, but not epithelial cells.

Its subcellular location is the lysosome. It catalyses the reaction a nucleoside 3',5'-cyclic phosphate + H2O = a nucleoside 5'-phosphate + H(+). The enzyme catalyses 3',5'-cyclic GMP + H2O = GMP + H(+). The catalysed reaction is 3',5'-cyclic AMP + H2O = AMP + H(+). Its activity is regulated as follows. Type I PDE are activated by the binding of calmodulin in the presence of Ca(2+). Functionally, calmodulin-dependent cyclic nucleotide phosphodiesterase with a dual specificity for the second messengers cAMP and cGMP, which are key regulators of many important physiological processes. Has a high affinity for both cAMP and cGMP. Modulates the amplitude and duration of the cAMP signal in sensory cilia in response to odorant stimulation, hence contributing to the generation of action potentials. Regulates smooth muscle cell proliferation. Regulates the stability of growth factor receptors, including PDGFRB. This is Dual specificity calcium/calmodulin-dependent 3',5'-cyclic nucleotide phosphodiesterase 1C from Rattus norvegicus (Rat).